A 259-amino-acid chain; its full sequence is Flagellar L-ring protein (259 aa).

Positions 1–15 (MKRISLIALVTIMSG) are cleaved as a signal peptide. Cys16 is lipidated: N-palmitoyl cysteine. Cys16 is lipidated: S-diacylglycerol cysteine.

Belongs to the FlgH family. The basal body constitutes a major portion of the flagellar organelle and consists of four rings (L,P,S, and M) mounted on a central rod.

It is found in the cell outer membrane. The protein resides in the bacterial flagellum basal body. In terms of biological role, assembles around the rod to form the L-ring and probably protects the motor/basal body from shearing forces during rotation. The polypeptide is Flagellar L-ring protein (Vibrio vulnificus (strain CMCP6)).